A 363-amino-acid chain; its full sequence is MKESVIRKLEGLLERNEEVLALLSDASIISDQDRFRALSKEYAQLEDVVKGFKAYQQAVADLETAKEMLEEDDPELKEMAQEEIKSAKASLERLEAELQILLLPKDPNDEANAFVEIRAGAGGDEAAIFAGDLFRMYSRYAETQRWQVEIMSANEGEHGGYKEVIARFSGERVYGKLKFESGGHRVQRVPETESQGRVHTSACTVAVLHEVPEAEAVEINPSELRIDTFRASGAGGQHVNKTDSAIRITHLPTGTVVECQDERSQHKNKARAMSVLVARLQAAEDEKRRSAEATTRRNLVGSGDRSERIRTYNFPQGRVSDHRINLTLYRLNEVMEGDLNALIEPIVQEHQADLLAALADEQG.

Q237 is modified (N5-methylglutamine). The segment covering 286 to 295 (EKRRSAEATT) has biased composition (basic and acidic residues). Residues 286 to 305 (EKRRSAEATTRRNLVGSGDR) are disordered.

The protein belongs to the prokaryotic/mitochondrial release factor family. Post-translationally, methylated by PrmC. Methylation increases the termination efficiency of RF1.

It is found in the cytoplasm. Its function is as follows. Peptide chain release factor 1 directs the termination of translation in response to the peptide chain termination codons UAG and UAA. This chain is Peptide chain release factor 1, found in Shewanella amazonensis (strain ATCC BAA-1098 / SB2B).